The sequence spans 557 residues: MSARISFLKNPDPCNHLSDYKLRYGTDGYKSFNNLFRCFNDARIKIKLQGIDIPRCSYCSVYQKRLYICLICRSISCSSHILLHTQLNKGHDIAIDVERSELYCCACIDQVYDSEFDEVVVSKQLFGLGMSVKSGADVVAVRSNKKRRLDSQLIIGSNFLVSPRDRREKWTFPLGLRGLNNLGSTCFMNAVLQALVHAPPLRNFWLSGQHNRDLCPRRTMGLLCLPCDLDVIFSAMFSGDRTPYSPAHLLYSWWQHSTNLATYEQQDSHEFFISLLDRIHENEGKSKCLYQDNEECQCITHKAFSGLLRSDVTCTTCGSTSTTYDPFIDISLTLDSMNGFSPADCRKNRYSGGPSVNAIMPTLSGCLDFFTRSEKLGPDQKLNCQSCGEKRESSKQMSIRRLPLLLCLHVKRFEHSLTRKTSRKIDSYLQYPFRLNMSPYLSSSIIGKRFGNRIFAFDGEGEYDSSSSSSPSAEFEIFAVVTHKGMLESGHYVTYLRLKGLWYRCDDAWINEVEEEVVRGCECYMLFYAQETVIQKAHKELSYQVISMADAFPFADC.

The segment at 36-130 adopts a UBP-type; degenerate zinc-finger fold; that stretch reads FRCFNDARIK…VSKQLFGLGM (95 aa). Residues Cys56, Cys59, Cys69, Cys72, Cys77, His80, His84, and His91 each contribute to the Zn(2+) site. Positions 177 to 531 constitute a USP domain; sequence RGLNNLGSTC…ECYMLFYAQE (355 aa). The active-site Nucleophile is Cys186. The active-site Proton acceptor is His491.

The protein belongs to the peptidase C19 family. Component of a deubiquitination module (DUB module) formed by ENY2, SGF11, and UBP22 in Arabidopsis. Interacts directly with SGF11, but not with ENY2.

It localises to the nucleus. The protein resides in the nucleoplasm. The enzyme catalyses Thiol-dependent hydrolysis of ester, thioester, amide, peptide and isopeptide bonds formed by the C-terminal Gly of ubiquitin (a 76-residue protein attached to proteins as an intracellular targeting signal).. In terms of biological role, component of a deubiquitination module (DUB module) that specifically deubiquinates monoubiquinated histone H2B (H2Bub). Does not seem to be a component of the TREX-2 complex. Seems to act independently of the SAGA multiprotein complex. The DUB module is responsible for the major H2Bub deubiquitinase activity in Arabidopsis. This is Ubiquitin C-terminal hydrolase 22 from Arabidopsis thaliana (Mouse-ear cress).